The sequence spans 3527 residues: BEACH domain-containing protein A2 (3527 aa).

3 disordered regions span residues 25 to 46 (AGEA…PSSS), 385 to 423 (SSPH…LNSR), and 454 to 490 (ESSG…CEQG). Low complexity predominate over residues 28–46 (AISDPTTPPSSSQASPSSS). Over residues 455–469 (SSGTSTSLLSQTKLT) the composition is skewed to low complexity. The segment covering 472–481 (SRRQTPSANN) has biased composition (polar residues). LRR repeat units lie at residues 1447–1470 (KLES…NYED), 1499–1522 (FSHL…VLSN), 1542–1565 (SIQI…SHNL), 1566–1588 (AILR…DVEV), and 2001–2024 (SSEM…SRSS). 2 disordered regions span residues 1992-2023 (GDHV…DSRS) and 2046-2081 (IPSP…SQGS). Polar residues predominate over residues 1998–2020 (VSASSEMKSLDLTGSSSQVQPID). LRR repeat units lie at residues 2128–2151 (TEQI…VDPE), 2221–2247 (LLSI…LLSI), and 2313–2336 (VSAV…LDTD). The disordered stretch occupies residues 2658-2680 (VNTDEKSETGSPIKSSSGKMDEI). A compositionally biased stretch (polar residues) spans 2666–2675 (TGSPIKSSSG). The 168-residue stretch at 2704–2871 (EHLEKIRFRY…EREEVFRNLL (168 aa)) folds into the BEACH-type PH domain. One can recognise a BEACH domain in the interval 2896–3188 (GSRLFKLMAK…QLFQKPHVKR (293 aa)). WD repeat units follow at residues 3272 to 3311 (HEGN…PRGS), 3322 to 3361 (AHTA…FVRQ), 3410 to 3451 (DLIV…DPVS), and 3483 to 3522 (FHKQ…LKAS).

The chain is BEACH domain-containing protein A2 from Arabidopsis thaliana (Mouse-ear cress).